A 916-amino-acid polypeptide reads, in one-letter code: Protein translocase subunit SecA (916 aa).

Residues Gln87, 105 to 109 (GEGKT), and Asp507 contribute to the ATP site. Zn(2+)-binding residues include Cys900, Cys902, Cys911, and His912.

The protein belongs to the SecA family. As to quaternary structure, monomer and homodimer. Part of the essential Sec protein translocation apparatus which comprises SecA, SecYEG and auxiliary proteins SecDF-YajC and YidC. Zn(2+) serves as cofactor.

Its subcellular location is the cell inner membrane. The protein resides in the cytoplasm. It catalyses the reaction ATP + H2O + cellular proteinSide 1 = ADP + phosphate + cellular proteinSide 2.. In terms of biological role, part of the Sec protein translocase complex. Interacts with the SecYEG preprotein conducting channel. Has a central role in coupling the hydrolysis of ATP to the transfer of proteins into and across the cell membrane, serving both as a receptor for the preprotein-SecB complex and as an ATP-driven molecular motor driving the stepwise translocation of polypeptide chains across the membrane. This chain is Protein translocase subunit SecA, found in Neisseria gonorrhoeae (strain NCCP11945).